The following is a 221-amino-acid chain: Adenylate kinase (221 aa).

10-15 (GAGKGT) serves as a coordination point for ATP. The segment at 30 to 59 (STGDMLRAAVKAGTPLGIEAKKVMDAGGLV) is NMP. AMP contacts are provided by residues T31, R36, 57–59 (GLV), 85–88 (GFPR), and Q92. The interval 122 to 159 (GRRVHVASGRTYHVKFNPPKADMVDDETGEALIQRDDD) is LID. ATP is bound by residues R123 and 132–133 (TY). Residues R156 and R167 each contribute to the AMP site. G207 contacts ATP.

This sequence belongs to the adenylate kinase family. As to quaternary structure, monomer.

It is found in the cytoplasm. The enzyme catalyses AMP + ATP = 2 ADP. Its pathway is purine metabolism; AMP biosynthesis via salvage pathway; AMP from ADP: step 1/1. Its function is as follows. Catalyzes the reversible transfer of the terminal phosphate group between ATP and AMP. Plays an important role in cellular energy homeostasis and in adenine nucleotide metabolism. In Cupriavidus metallidurans (strain ATCC 43123 / DSM 2839 / NBRC 102507 / CH34) (Ralstonia metallidurans), this protein is Adenylate kinase.